A 273-amino-acid chain; its full sequence is Urease accessory protein UreD (273 aa).

This sequence belongs to the UreD family. In terms of assembly, ureD, UreF and UreG form a complex that acts as a GTP-hydrolysis-dependent molecular chaperone, activating the urease apoprotein by helping to assemble the nickel containing metallocenter of UreC. The UreE protein probably delivers the nickel.

Its subcellular location is the cytoplasm. In terms of biological role, required for maturation of urease via the functional incorporation of the urease nickel metallocenter. The sequence is that of Urease accessory protein UreD from Bacillus cereus (strain ATCC 10987 / NRS 248).